The sequence spans 874 residues: Translation initiation factor IF-2 (874 aa).

The disordered stretch occupies residues 1-289 (MKIKNAQLTK…KHYDEHSVQR (289 aa)). Residues 31 to 48 (SSSEKPTTKVPEKVAKEK) show a composition bias toward basic and acidic residues. Over residues 81 to 104 (RSSFASEDSTIPSPVSVDTESTAF) the composition is skewed to polar residues. Over residues 105–118 (SPPVVEEVVSPLES) the composition is skewed to low complexity. Composition is skewed to basic and acidic residues over residues 144–158 (PPKK…KEPP) and 186–198 (PKKE…KERT). Over residues 199–211 (GTVQTKPQQSSEV) the composition is skewed to polar residues. Positions 228–260 (YRRDTSKRPGSDFRDRSKKDDSPKAFTGRDRYG) are enriched in basic and acidic residues. Basic residues predominate over residues 271 to 280 (RKKRVQKTKK). In terms of domain architecture, tr-type G spans 380–549 (IRPPIVAFMG…ALQAEVLELK (170 aa)). Positions 389–396 (GHVDHGKT) are G1. Residue 389–396 (GHVDHGKT) coordinates GTP. Positions 414–418 (AITQH) are G2. Residues 435-438 (DTPG) are G3. GTP is bound by residues 435-439 (DTPGH) and 489-492 (NKCD). Positions 489-492 (NKCD) are G4. Residues 525-527 (SAK) are G5.

This sequence belongs to the TRAFAC class translation factor GTPase superfamily. Classic translation factor GTPase family. IF-2 subfamily.

Its subcellular location is the cytoplasm. Its function is as follows. One of the essential components for the initiation of protein synthesis. Protects formylmethionyl-tRNA from spontaneous hydrolysis and promotes its binding to the 30S ribosomal subunits. Also involved in the hydrolysis of GTP during the formation of the 70S ribosomal complex. This Chlamydia abortus (strain DSM 27085 / S26/3) (Chlamydophila abortus) protein is Translation initiation factor IF-2.